A 324-amino-acid polypeptide reads, in one-letter code: Methenyltetrahydromethanopterin cyclohydrolase (324 aa).

It belongs to the MCH family.

Its subcellular location is the cytoplasm. It catalyses the reaction 5,10-methenyl-5,6,7,8-tetrahydromethanopterin + H2O = N(5)-formyl-5,6,7,8-tetrahydromethanopterin + H(+). It participates in one-carbon metabolism; formaldehyde degradation; formate from formaldehyde (H(4)MPT route): step 3/5. Functionally, catalyzes the hydrolysis of methenyl-H(4)MPT(+) to 5-formyl-H(4)MPT. This Methylobacterium nodulans (strain LMG 21967 / CNCM I-2342 / ORS 2060) protein is Methenyltetrahydromethanopterin cyclohydrolase.